Reading from the N-terminus, the 113-residue chain is Protein S100-A9 (113 aa).

N-acetylalanine is present on Ala2. 2 consecutive EF-hand domains span residues 13–48 (ITTI…QLAT) and 55–90 (RNEA…LIFA). His21 is a binding site for Zn(2+). 2 residues coordinate Ca(2+): Ser24 and His29. Residue Asp31 coordinates Zn(2+). 7 residues coordinate Ca(2+): Thr32, Glu37, Asp68, Asn70, Asp72, Gln74, and Glu79. Residues His92 and His96 each coordinate Zn(2+). The residue at position 107 (His107) is a Pros-methylhistidine.

This sequence belongs to the S-100 family. Homodimer. Preferentially exists as a heterodimer or heterotetramer with S100A8 known as calprotectin (S100A8/A9). S100A9 interacts with ATP2A2. S100A9 interacts with AGER, and with the heterodimeric complex formed by TLR4 and LY96 in the presence of calcium and/or zinc ions. S100A9 binds quinoline-3-carboxamides in the presence of calcium and/or zinc ions. S100A9 interacts with amyloid-beta protein 40. Calprotectin (S100A8/9) interacts with CEACAM3 and tubulin filaments in a calcium-dependent manner. Heterotetrameric calprotectin (S100A8/A9) interacts with ANXA6 and associates with tubulin filaments in activated monocytes. Calprotectin (S100A8/9) interacts with NCF2/P67PHOX, RAC1, RAC2, CYBA and CYBB. Calprotectin (S100A8/9) interacts with NOS2 to form the iNOS-S100A8/A9 transnitrosylase complex; induced by LDL(ox). Calprotectin (S100A8/9) interacts with CD69. In terms of processing, phosphorylated. Phosphorylation inhibits activation of tubulin polymerization. Post-translationally, methylation at His-107 by METTL9 reduces zinc-binding without affecting heterodimerization with S100A8.

It is found in the secreted. It localises to the cytoplasm. Its subcellular location is the cytoskeleton. The protein localises to the cell membrane. S100A9 is a calcium- and zinc-binding protein which plays a prominent role in the regulation of inflammatory processes and immune response. It can induce neutrophil chemotaxis, adhesion, can increase the bactericidal activity of neutrophils by promoting phagocytosis via activation of SYK, PI3K/AKT, and ERK1/2 and can induce degranulation of neutrophils by a MAPK-dependent mechanism. Predominantly found as calprotectin (S100A8/A9) which has a wide plethora of intra- and extracellular functions. The intracellular functions include: facilitating leukocyte arachidonic acid trafficking and metabolism, modulation of the tubulin-dependent cytoskeleton during migration of phagocytes and activation of the neutrophilic NADPH-oxidase. Also participates in regulatory T-cell differentiation together with CD69. Activates NADPH-oxidase by facilitating the enzyme complex assembly at the cell membrane, transferring arachidonic acid, an essential cofactor, to the enzyme complex and S100A8 contributes to the enzyme assembly by directly binding to NCF2/P67PHOX. The extracellular functions involve pro-inflammatory, antimicrobial, oxidant-scavenging and apoptosis-inducing activities. Its pro-inflammatory activity includes recruitment of leukocytes, promotion of cytokine and chemokine production, and regulation of leukocyte adhesion and migration. Acts as an alarmin or a danger associated molecular pattern (DAMP) molecule and stimulates innate immune cells via binding to pattern recognition receptors such as Toll-like receptor 4 (TLR4) and receptor for advanced glycation endproducts (AGER). Binding to TLR4 and AGER activates the MAP-kinase and NF-kappa-B signaling pathways resulting in the amplification of the pro-inflammatory cascade. Has antimicrobial activity towards bacteria and fungi and exerts its antimicrobial activity probably via chelation of Zn(2+) which is essential for microbial growth. Can induce cell death via autophagy and apoptosis and this occurs through the cross-talk of mitochondria and lysosomes via reactive oxygen species (ROS) and the process involves BNIP3. Can regulate neutrophil number and apoptosis by an anti-apoptotic effect; regulates cell survival via ITGAM/ITGB and TLR4 and a signaling mechanism involving MEK-ERK. Its role as an oxidant scavenger has a protective role in preventing exaggerated tissue damage by scavenging oxidants. The iNOS-S100A8/A9 transnitrosylase complex is proposed to direct selective inflammatory stimulus-dependent S-nitrosylation of multiple targets such as GAPDH, NXA5, EZR, MSN and VIM by recognizing a [IL]-x-C-x-x-[DE] motif. This Mus musculus (Mouse) protein is Protein S100-A9 (S100a9).